The following is a 113-amino-acid chain: Nucleoid-associated protein CLJ_B0037 (113 aa).

Basic and acidic residues predominate over residues 93 to 102; it reads EEDTSSEVKR. The disordered stretch occupies residues 93-113; it reads EEDTSSEVKRLTGGMNLPGMF.

The protein belongs to the YbaB/EbfC family. Homodimer.

The protein localises to the cytoplasm. It is found in the nucleoid. Functionally, binds to DNA and alters its conformation. May be involved in regulation of gene expression, nucleoid organization and DNA protection. The polypeptide is Nucleoid-associated protein CLJ_B0037 (Clostridium botulinum (strain 657 / Type Ba4)).